Here is a 109-residue protein sequence, read N- to C-terminus: uncharacterized protein (109 aa).

A disordered region spans residues 67 to 96 (YFGNKLWRPTPRSGQSGQSRPKTGPHGSQR). A compositionally biased stretch (polar residues) spans 78 to 87 (RSGQSGQSRP).

This is an uncharacterized protein from Saccharomyces cerevisiae (strain ATCC 204508 / S288c) (Baker's yeast).